Consider the following 172-residue polypeptide: Ribosome maturation factor RimM (172 aa).

Residues 99 to 171 form the PRC barrel domain; that stretch reads DDIPTWNYFI…LLTVEVPDGL (73 aa).

Belongs to the RimM family. As to quaternary structure, binds ribosomal protein uS19.

Its subcellular location is the cytoplasm. In terms of biological role, an accessory protein needed during the final step in the assembly of 30S ribosomal subunit, possibly for assembly of the head region. Essential for efficient processing of 16S rRNA. May be needed both before and after RbfA during the maturation of 16S rRNA. It has affinity for free ribosomal 30S subunits but not for 70S ribosomes. The protein is Ribosome maturation factor RimM of Phocaeicola vulgatus (strain ATCC 8482 / DSM 1447 / JCM 5826 / CCUG 4940 / NBRC 14291 / NCTC 11154) (Bacteroides vulgatus).